The following is a 369-amino-acid chain: Dual-specificity RNA methyltransferase RlmN (369 aa).

Glutamate 96 (proton acceptor) is an active-site residue. Residues 102–338 form the Radical SAM core domain; that stretch reads DGERGTLCVS…VTTIRTTRGD (237 aa). Cysteine 109 and cysteine 344 are oxidised to a cystine. Residues cysteine 116, cysteine 120, and cysteine 123 each contribute to the [4Fe-4S] cluster site. Residues 169–170, serine 201, 223–225, and asparagine 301 each bind S-adenosyl-L-methionine; these read GE and SLH. Residue cysteine 344 is the S-methylcysteine intermediate of the active site.

The protein belongs to the radical SAM superfamily. RlmN family. [4Fe-4S] cluster is required as a cofactor.

It is found in the cytoplasm. It carries out the reaction adenosine(2503) in 23S rRNA + 2 reduced [2Fe-2S]-[ferredoxin] + 2 S-adenosyl-L-methionine = 2-methyladenosine(2503) in 23S rRNA + 5'-deoxyadenosine + L-methionine + 2 oxidized [2Fe-2S]-[ferredoxin] + S-adenosyl-L-homocysteine. The enzyme catalyses adenosine(37) in tRNA + 2 reduced [2Fe-2S]-[ferredoxin] + 2 S-adenosyl-L-methionine = 2-methyladenosine(37) in tRNA + 5'-deoxyadenosine + L-methionine + 2 oxidized [2Fe-2S]-[ferredoxin] + S-adenosyl-L-homocysteine. Specifically methylates position 2 of adenine 2503 in 23S rRNA and position 2 of adenine 37 in tRNAs. m2A2503 modification seems to play a crucial role in the proofreading step occurring at the peptidyl transferase center and thus would serve to optimize ribosomal fidelity. In Marinobacter nauticus (strain ATCC 700491 / DSM 11845 / VT8) (Marinobacter aquaeolei), this protein is Dual-specificity RNA methyltransferase RlmN.